We begin with the raw amino-acid sequence, 313 residues long: Serine/threonine-protein phosphatase PP2A-4 catalytic subunit (313 aa).

The Mn(2+) site is built by Asp61, His63, Asp89, and Asn121. The active-site Proton donor is the His122. The Mn(2+) site is built by His171 and His245. Leu313 is modified (leucine methyl ester).

This sequence belongs to the PPP phosphatase family. PP-2A subfamily. As to quaternary structure, PP2A consists of a common heterodimeric core enzyme, composed of a 36 kDa catalytic subunit (subunit C) and a 65 kDa constant regulatory subunit (subunit A), that associates with a variety of regulatory subunits such as subunits B (the R2/B/PR55/B55, R3/B''/PR72/PR130/PR59 and R5/B'/B56 families). Interacts with SIC/RON3. Mn(2+) serves as cofactor. In terms of processing, reversibly methyl esterified on Leu-313 by leucine carboxyl methyltransferase 1 (LCMT1) and pectin methylesterase 1 (PME1). Carboxyl methylation influences the affinity of the catalytic subunit for the different regulatory subunits, thereby modulating the PP2A holoenzyme's substrate specificity, enzyme activity and cellular localization. Phosphorylation of either threonine (by autophosphorylation-activated protein kinase) or tyrosine results in inactivation of the phosphatase. Auto-dephosphorylation has been suggested as a mechanism for reactivation.

The protein resides in the cytoplasm. The catalysed reaction is O-phospho-L-seryl-[protein] + H2O = L-seryl-[protein] + phosphate. It catalyses the reaction O-phospho-L-threonyl-[protein] + H2O = L-threonyl-[protein] + phosphate. Its function is as follows. Functions redundantly with PP2A3, and is involved in establishing auxin gradients, apical-basal axis of polarity and root and shoot apical meristem during embryogenesis. May dephosphorylate PIN1 and regulate its subcellular distribution for polar auxin transport. The holoenzyme composed of PP2AA1, PP2A4 and B'ZETA or B'ETA acts as a negative regulator of plant innate immunity by controlling BAK1 phosphorylation state and activation in surface-localized immune receptor complexes. The chain is Serine/threonine-protein phosphatase PP2A-4 catalytic subunit from Arabidopsis thaliana (Mouse-ear cress).